An 856-amino-acid chain; its full sequence is Probable alpha,alpha-trehalose-phosphate synthase [UDP-forming] 8 (856 aa).

The residue at position 5 (Ser-5) is a Phosphoserine. Phosphothreonine is present on Thr-32. The interval 57–541 (ERKIIVANML…AKSFMQDLER (485 aa)) is glycosyltransferase.

The protein in the N-terminal section; belongs to the glycosyltransferase 20 family. This sequence in the C-terminal section; belongs to the trehalose phosphatase family. Expressed in leaves, roots, stems and flowers.

It carries out the reaction D-glucose 6-phosphate + UDP-alpha-D-glucose = alpha,alpha-trehalose 6-phosphate + UDP + H(+). This is Probable alpha,alpha-trehalose-phosphate synthase [UDP-forming] 8 (TPS8) from Arabidopsis thaliana (Mouse-ear cress).